Reading from the N-terminus, the 412-residue chain is Phospholipase A1-IIdelta (412 aa).

Position 2 is an N-acetylalanine (A2). Catalysis depends on S238, which acts as the Acyl-ester intermediate. Active-site charge relay system residues include S238, D297, and H336.

The protein belongs to the AB hydrolase superfamily. Lipase family. As to expression, expressed in leaves, stems, flowers and siliques, and, at low levels, in seeds and roots (at protein level).

It is found in the cytoplasm. Its function is as follows. Acylhydrolase that catalyzes the hydrolysis of phosphatidylcholine (PC) at the sn-1 position. High activity toward PC, medium activity toward monogalactosyldiacylglycerol (MGDG) and low activity toward triacylglycerol (TAG). Confers sensitivity to UV-B radiation probably by deesterifying membrane phospholipids. The sequence is that of Phospholipase A1-IIdelta from Arabidopsis thaliana (Mouse-ear cress).